A 1523-amino-acid polypeptide reads, in one-letter code: WD repeat-containing protein 62 (1523 aa).

Alanine 2 carries the N-acetylalanine modification. Residue serine 33 is modified to Phosphoserine. Threonine 46 bears the Phosphothreonine mark. WD repeat units follow at residues 109–150 (TTRK…QVAE), 153–194 (GHKY…VVAS), 196–234 (KVSCRVIALSFSEDSSYFVTVGNRHVRFWFLEASTEAKV), 291–330 (INLKVSLSSCLCVSDELIFCGCTDGIVRIFQAHSLLYLTN), 357–396 (AVYPDTVALTFDPVHQWLSCVYKDHSIYIWDVKDIDEVSK), 411–450 (EVYPEFEDQRACLPSGTFLTCSSDNTIRFWNLDSASDTRW), 490–529 (DMKAGVRVMQVSPDGQHLASGDRSGNLRIHELHFMDELIK), 532–574 (AHDA…NLEQ), 578–618 (DHSS…DGLH), 626–665 (AEKTTLYDMDIDITQKYVAVACQDRNVRVYNTVSGKQKKC), 671–713 (GDEG…KMFG), and 714–752 (HSEIVTGMKFTYDCRHLITVSGDSCVFIWHLGPEITTCM). A Phosphoserine modification is found at serine 501. The interval 762–824 (QEQQQQPKDQ…PSKDSLDPDP (63 aa)) is disordered. A compositionally biased stretch (polar residues) spans 776 to 790 (PPSQETYASTPSEIR). Residues 797-809 (QTEDEMEEECEPE) are compositionally biased toward acidic residues. Residues 803 to 846 (EEECEPEELLKTPSKDSLDPDPRCLLTNGKLPLWAKRLLGDDDV) form a WD 13 repeat. Over residues 810–824 (ELLKTPSKDSLDPDP) the composition is skewed to basic and acidic residues. Serine 966 and serine 972 each carry phosphoserine. A disordered region spans residues 1000-1072 (VSSVSSKDQS…GLGNGSLPQT (73 aa)). Threonine 1072 carries the phosphothreonine modification. Phosphoserine occurs at positions 1117, 1143, and 1169. Residues 1143-1258 (SPEAQPVGQG…SLHKPLSPGQ (116 aa)) form a disordered region. 2 stretches are compositionally biased toward polar residues: residues 1167–1177 (YMSSDGTNVLS) and 1199–1213 (TSVLTTGREQSISAP). Over residues 1214 to 1225 (SSCSYLESTTSS) the composition is skewed to low complexity. Polar residues predominate over residues 1226-1235 (HAKTTRSISL). Residue serine 1234 is modified to Phosphoserine.

In terms of assembly, can form homodimers (via C-terminus). Interacts (via C-terminus) with MAPKBP1 (via C-terminus). Interacts with CDK5RAP2, CEP152, CEP63 and KIAA0753. CEP63, CDK5RAP2, CEP152, WDR62 are proposed to form a stepwise assembled complex at the centrosome forming a ring near parental centrioles. Prominent in neural crest lineages from 9.5 dpc to 11.5 dpc. Also expressed in the ventricular and subventricular zones during the period of cerebral cortical neurogenesis (11.5-16.5 dpc), with expression decreasing in intensity by 17.5 dpc. In the cerebellum, it is strongly expressed in precursors of granule neurons at late embryonic and early postnatal stages; by postnatal day 9 (P9). Present in fetal brain, enriched within the ventricular and subventricular zone (at protein level).

It localises to the nucleus. It is found in the cytoplasm. Its subcellular location is the cytoskeleton. The protein localises to the spindle pole. The protein resides in the microtubule organizing center. It localises to the centrosome. It is found in the centriole. Its function is as follows. Required for cerebral cortical development. Plays a role in neuronal proliferation and migration. Plays a role in mother-centriole-dependent centriole duplication; the function seems also to involve CEP152, CDK5RAP2 and CEP63 through a stepwise assembled complex at the centrosome that recruits CDK2 required for centriole duplication. The chain is WD repeat-containing protein 62 (Wdr62) from Mus musculus (Mouse).